Consider the following 245-residue polypeptide: Short-chain dehydrogenase/reductase pyiH (245 aa).

Positions 18, 42, 68, and 95 each coordinate NADP(+). Serine 150 acts as the Proton donor in catalysis.

The protein belongs to the short-chain dehydrogenases/reductases (SDR) family.

The protein operates within mycotoxin biosynthesis. In terms of biological role, short-chain dehydrogenase/reductase; part of the gene cluster that mediates the biosynthesis of the mycotoxin pyrichalasin H, a tyrosine-derived cytochalasan that inhibits the growth of rice seedlings, but also inhibits lymphocyte capping and actin polymerization and alters cell morphology. Pyrichalasin H is indicated as the responsible agent for the genus-specific pathogenicity of M.grisea toward crabgrass. The first step in the pathway is catalyzed by the O-methyltransferase pyiA which methylates free tyrosine to generate the precursor O-methyltyrosine. The hybrid PKS-NRPS pyiS, assisted by the enoyl reductase pyiC, are responsible for fusion of the O-methyltyrosine precursor and the polyketide backbone. The polyketide synthase module (PKS) of pyiS is responsible for the synthesis of the polyketide backbone and the downstream nonribosomal peptide synthetase (NRPS) amidates the carboxyl end of the polyketide with the O-methyltyrosine precursor. As the NRPS A-domain demonstrates substrate tolerance, pyiS can also use phenylalanine, tyrosine and even para-chlorophenylalanine as amino acid precursor, which leads to the production of novel cytochalasans, including halogenated cytochalasans. Because pyiS lacks a designated enoylreductase (ER) domain, the required activity is provided the enoyl reductase pyiC. Reduction by the hydrolyase pyiE leads to 1,5-dihydropyrrolone, which is substrate for dehydration and intra-molecular Diels-Alder cyclization by the Diels-Alderase pyiF to yield the required isoindolone-fused macrocycle. The tailoring cytochrome P450 monooxygenases piyD and piyG catalyze the hydroxylation at C-18 and C-7, respectivily, whereas the short-chain dehydrogenase/reductase pyiH reduces the carbonyl at C-21 in preparation for the transfer of an acetyl group by the acetyltransferase pyiB. These 3 reactions whose order is not clear yet, lead to the production of O-methylpyrichalasin J, a deacetylated pyrichalasin H. Finally, pyiB to converts O-methylpyrichalasin J into the final product pyrichalasin H via acetylation of C-21. The polypeptide is Short-chain dehydrogenase/reductase pyiH (Pyricularia grisea (Crabgrass-specific blast fungus)).